Here is a 590-residue protein sequence, read N- to C-terminus: Monoterepene synthase TPS1, chloropastic (590 aa).

The N-terminal 42 residues, 1–42 (MALNTFLHFPPCSLSSFSCAVPKLPLAIFHKTMARQIRCPRA), are a transit peptide targeting the chloroplast. (2E)-geranyl diphosphate is bound by residues arginine 304, aspartate 341, aspartate 345, arginine 483, and aspartate 486. Mg(2+) is bound by residues aspartate 341 and aspartate 345. A DDXXD motif motif is present at residues 341–345 (DDMYD). The Mg(2+) site is built by aspartate 486, threonine 490, and glutamate 494.

It belongs to the terpene synthase family. Tpsb subfamily. Monomer. Mg(2+) serves as cofactor.

It localises to the plastid. Its subcellular location is the chloroplast. It carries out the reaction (2E)-geranyl diphosphate = beta-thujene + diphosphate. It catalyses the reaction (2E)-geranyl diphosphate = sabinene + diphosphate. The enzyme catalyses (2E)-geranyl diphosphate = beta-pinene + diphosphate. The catalysed reaction is (2E)-geranyl diphosphate = alpha-terpinene + diphosphate. Its pathway is secondary metabolite biosynthesis; terpenoid biosynthesis. Functionally, monoterpene synthase involved in the biosynthesis of volatile organic compounds. Mediates the conversion of (2E)-geranyl diphosphate (GPP) into beta-thujene, sabinene, beta-pinene and alpha-terpinene. Does not use (2E,6E)-farnesyl diphosphate (FPP) as substrate. This Cananga odorata (Ylang-ylang tree) protein is Monoterepene synthase TPS1, chloropastic.